The chain runs to 241 residues: Sugar fermentation stimulation protein homolog (241 aa).

The protein belongs to the SfsA family.

The polypeptide is Sugar fermentation stimulation protein homolog (Jannaschia sp. (strain CCS1)).